Consider the following 579-residue polypeptide: Arginine--tRNA ligase (579 aa).

The 'HIGH' region signature appears at alanine 136–histidine 146.

It belongs to the class-I aminoacyl-tRNA synthetase family. As to quaternary structure, monomer.

It localises to the cytoplasm. It carries out the reaction tRNA(Arg) + L-arginine + ATP = L-arginyl-tRNA(Arg) + AMP + diphosphate. This chain is Arginine--tRNA ligase, found in Anaplasma marginale (strain St. Maries).